Here is a 192-residue protein sequence, read N- to C-terminus: Peptidyl-tRNA hydrolase (192 aa).

Position 17 (histidine 17) interacts with tRNA. The Proton acceptor role is filled by histidine 22. TRNA-binding residues include phenylalanine 68, asparagine 70, and asparagine 116.

It belongs to the PTH family. As to quaternary structure, monomer.

The protein resides in the cytoplasm. The catalysed reaction is an N-acyl-L-alpha-aminoacyl-tRNA + H2O = an N-acyl-L-amino acid + a tRNA + H(+). Its function is as follows. Hydrolyzes ribosome-free peptidyl-tRNAs (with 1 or more amino acids incorporated), which drop off the ribosome during protein synthesis, or as a result of ribosome stalling. In terms of biological role, catalyzes the release of premature peptidyl moieties from peptidyl-tRNA molecules trapped in stalled 50S ribosomal subunits, and thus maintains levels of free tRNAs and 50S ribosomes. The sequence is that of Peptidyl-tRNA hydrolase from Stenotrophomonas maltophilia (strain R551-3).